The following is a 427-amino-acid chain: Glutamate-1-semialdehyde 2,1-aminomutase 1 (427 aa).

An N6-(pyridoxal phosphate)lysine modification is found at Lys-267.

The protein belongs to the class-III pyridoxal-phosphate-dependent aminotransferase family. HemL subfamily. In terms of assembly, homodimer. Pyridoxal 5'-phosphate serves as cofactor.

Its subcellular location is the cytoplasm. It catalyses the reaction (S)-4-amino-5-oxopentanoate = 5-aminolevulinate. It participates in porphyrin-containing compound metabolism; protoporphyrin-IX biosynthesis; 5-aminolevulinate from L-glutamyl-tRNA(Glu): step 2/2. This is Glutamate-1-semialdehyde 2,1-aminomutase 1 from Macrococcus caseolyticus (strain JCSC5402) (Macrococcoides caseolyticum).